The following is a 317-amino-acid chain: Apolipoprotein E (317 aa).

The first 18 residues, Met1–Ala18, serve as a signal peptide directing secretion. 8 consecutive repeat copies span residues Thr80–Ser101, Pro102–Gly123, Ala124–Gly145, Gln146–Leu167, Arg168–Glu189, Arg190–Ala211, Thr212–Arg233, and Ala234–Ala255. Residues Thr80–Ala255 are 8 X 22 AA approximate tandem repeats. Met143 is subject to Methionine sulfoxide. Ser147 is subject to Phosphoserine. The tract at residues His158–Arg168 is LDL and other lipoprotein receptors binding. Leu162 to Arg165 provides a ligand contact to heparin. The tract at residues Ala210 to Met290 is lipid-binding and lipoprotein association. Gly229–Met236 contacts heparin. A homooligomerization region spans residues Gln266–His317. A specificity for association with VLDL region spans residues Arg278–Met290.

It belongs to the apolipoprotein A1/A4/E family. As to quaternary structure, homotetramer. May interact with ABCA1; functionally associated with ABCA1 in the biogenesis of HDLs. May interact with APP/A4 amyloid-beta peptide; the interaction is extremely stable in vitro but its physiological significance is unclear. May interact with MAPT. May interact with MAP2. In the cerebrospinal fluid, interacts with secreted SORL1. Interacts with PMEL; this allows the loading of PMEL luminal fragment on ILVs to induce fibril nucleation. APOE exists as multiple glycosylated and sialylated glycoforms within cells and in plasma. The extent of glycosylation and sialylation are tissue and context specific. In terms of processing, glycated in plasma VLDL. Post-translationally, phosphorylated by FAM20C in the extracellular medium.

It localises to the secreted. The protein localises to the extracellular space. Its subcellular location is the extracellular matrix. The protein resides in the extracellular vesicle. It is found in the endosome. It localises to the multivesicular body. Its function is as follows. APOE is an apolipoprotein, a protein associating with lipid particles, that mainly functions in lipoprotein-mediated lipid transport between organs via the plasma and interstitial fluids. APOE is a core component of plasma lipoproteins and is involved in their production, conversion and clearance. Apolipoproteins are amphipathic molecules that interact both with lipids of the lipoprotein particle core and the aqueous environment of the plasma. As such, APOE associates with chylomicrons, chylomicron remnants, very low density lipoproteins (VLDL) and intermediate density lipoproteins (IDL) but shows a preferential binding to high-density lipoproteins (HDL). It also binds a wide range of cellular receptors including the LDL receptor/LDLR, the LDL receptor-related proteins LRP1, LRP2 and LRP8 and the very low-density lipoprotein receptor/VLDLR that mediate the cellular uptake of the APOE-containing lipoprotein particles. Finally, APOE also has a heparin-binding activity and binds heparan-sulfate proteoglycans on the surface of cells, a property that supports the capture and the receptor-mediated uptake of APOE-containing lipoproteins by cells. A main function of APOE is to mediate lipoprotein clearance through the uptake of chylomicrons, VLDLs, and HDLs by hepatocytes. APOE is also involved in the biosynthesis by the liver of VLDLs as well as their uptake by peripheral tissues ensuring the delivery of triglycerides and energy storage in muscle, heart and adipose tissues. By participating in the lipoprotein-mediated distribution of lipids among tissues, APOE plays a critical role in plasma and tissues lipid homeostasis. APOE is also involved in two steps of reverse cholesterol transport, the HDLs-mediated transport of cholesterol from peripheral tissues to the liver, and thereby plays an important role in cholesterol homeostasis. First, it is functionally associated with ABCA1 in the biogenesis of HDLs in tissues. Second, it is enriched in circulating HDLs and mediates their uptake by hepatocytes. APOE also plays an important role in lipid transport in the central nervous system, regulating neuron survival and sprouting. The protein is Apolipoprotein E (APOE) of Macaca fascicularis (Crab-eating macaque).